The chain runs to 385 residues: ATP phosphoribosyltransferase regulatory subunit (385 aa).

Belongs to the class-II aminoacyl-tRNA synthetase family. HisZ subfamily. In terms of assembly, heteromultimer composed of HisG and HisZ subunits.

Its subcellular location is the cytoplasm. It participates in amino-acid biosynthesis; L-histidine biosynthesis; L-histidine from 5-phospho-alpha-D-ribose 1-diphosphate: step 1/9. In terms of biological role, required for the first step of histidine biosynthesis. May allow the feedback regulation of ATP phosphoribosyltransferase activity by histidine. The polypeptide is ATP phosphoribosyltransferase regulatory subunit (Bordetella petrii (strain ATCC BAA-461 / DSM 12804 / CCUG 43448)).